We begin with the raw amino-acid sequence, 183 residues long: Ferredoxin-2, mitochondrial (183 aa).

Residues 1-52 (MAASVAWGGVNAGFLLRAARGAWWSRPGGFWGSGEAAAPAIARKFRATGSRP) constitute a mitochondrion transit peptide. One can recognise a 2Fe-2S ferredoxin-type domain in the interval 68–170 (VNVVFVDRSG…GAEFTLPKIT (103 aa)). Cys-105, Cys-111, Cys-114, and Cys-151 together coordinate [2Fe-2S] cluster.

Belongs to the adrenodoxin/putidaredoxin family. As to quaternary structure, component of the mitochondrial core iron-sulfur cluster (ISC) complex composed of NFS1, LYRM4, NDUFAB1, ISCU, FXN, and FDX2; this complex is a heterohexamer containing two copies of each monomer. Form a heterodimer complex with NFS1. Interacts (in both their reduced and oxidized states) with the cysteine desulfurase (NFS1:LYRM4) complex; this interaction stimulates cysteine desulfurase activity, and serves as a reductant for Fe-S cluster assembly. [2Fe-2S] cluster is required as a cofactor.

The protein resides in the mitochondrion. The protein localises to the mitochondrion matrix. Its function is as follows. Electron donor, of the core iron-sulfur cluster (ISC) assembly complex, that acts to reduce the persulfide into sulfide during [2Fe-2S] clusters assembly on the scaffolding protein ISCU. The core iron-sulfur cluster (ISC) assembly complex is involved in the de novo synthesis of a [2Fe-2S] cluster, the first step of the mitochondrial iron-sulfur protein biogenesis. This process is initiated by the cysteine desulfurase complex (NFS1:LYRM4:NDUFAB1) that produces persulfide which is delivered on the scaffold protein ISCU in a FXN-dependent manner. Then this complex is stabilized by FDX2 which provides reducing equivalents to accomplish the [2Fe-2S] cluster assembly. Finally, the [2Fe-2S] cluster is transferred from ISCU to chaperone proteins, including HSCB, HSPA9 and GLRX5. Essential for coenzyme Q biosynthesis: together with FDXR, transfers the electrons required for the hydroxylation reaction performed by COQ6. The sequence is that of Ferredoxin-2, mitochondrial from Bos taurus (Bovine).